The sequence spans 417 residues: D-galactonate dehydratase family member Dd703_0947 (417 aa).

Position 127 (His127) interacts with substrate. Residue Tyr158 is the Proton donor/acceptor of the active site. Mg(2+) is bound at residue Asp223. The active-site Proton donor/acceptor is His225. Residues Glu249 and Glu275 each coordinate Mg(2+). Substrate is bound by residues Glu275, Arg296, His325, Asp329, and Glu352.

It belongs to the mandelate racemase/muconate lactonizing enzyme family. GalD subfamily. The cofactor is Mg(2+).

The catalysed reaction is D-mannonate = 2-dehydro-3-deoxy-D-gluconate + H2O. It carries out the reaction D-gluconate = 2-dehydro-3-deoxy-D-gluconate + H2O. Has low dehydratase activity with D-mannonate and D-gluconate, suggesting that these are not physiological substrates and that it has no significant role in the in vivo degradation of these compounds. Has no detectable activity with a panel of 70 other acid sugars (in vitro). The sequence is that of D-galactonate dehydratase family member Dd703_0947 from Musicola paradisiaca (strain Ech703) (Dickeya paradisiaca).